Consider the following 289-residue polypeptide: MSTMNMPNVLNYQYNDNNIMNNSEYWTLVNILSTPMTPEVRKIVLDKLTSINNNLLMENKTNIQSNNFFGPNFDHVSRSPLNESRTSFKNIPQSRNLPRDYVRDSSKNISKDFTRESIKNHDKEFERDYLERDNLPRENFRNDTDIPKDPLRDRMRESLRDSSRNILRSGVLNSRKKDFEENLHPSFNSLDSLNHGHRNPIPISNPISSKTSNTQFPKKIVYNPNIFDNLSDDSEEIDLDTVSDSVINNNFNRHSDNSSILDEKLNRIRNLQNKLLSVRSKKISSVRNH.

The segment covering 80-96 has biased composition (polar residues); it reads PLNESRTSFKNIPQSRN. 2 disordered regions span residues 80–101 and 136–157; these read PLNE…PRDY and PREN…RMRE.

This is an uncharacterized protein from Acanthamoeba polyphaga (Amoeba).